A 272-amino-acid chain; its full sequence is NADH-cytochrome b5 reductase 3 (272 aa).

Positions 11–123 (DIKYPLRLID…RGPNGLLVYQ (113 aa)) constitute an FAD-binding FR-type domain. The residue at position 13 (K13) is an N6-acetyllysine. Position 14 is a phosphotyrosine (Y14). An N6-acetyllysine modification is found at K21. Residues R63, P64, Y65, V80, K82, and Y84 each contribute to the FAD site. K91 carries the post-translational modification N6-acetyllysine. FAD-binding residues include K97, M98, S99, and T156.

The protein belongs to the flavoprotein pyridine nucleotide cytochrome reductase family. In terms of assembly, component of a complex composed of cytochrome b5, NADH-cytochrome b5 reductase (CYB5R3) and MTARC2. Interacts with MTLN; the interaction is required to maintain cellular lipid composition and leads to stimulation of mitochondrial respiratory complex I activity. It depends on FAD as a cofactor.

The protein resides in the endoplasmic reticulum membrane. It is found in the mitochondrion outer membrane. The catalysed reaction is 2 Fe(III)-[cytochrome b5] + NADH = 2 Fe(II)-[cytochrome b5] + NAD(+) + H(+). Its function is as follows. Catalyzes the reduction of two molecules of cytochrome b5 using NADH as the electron donor. The sequence is that of NADH-cytochrome b5 reductase 3 (CYB5R3) from Sus scrofa (Pig).